Reading from the N-terminus, the 319-residue chain is Ribonuclease Z (319 aa).

H62, H64, D66, H67, H139, D209, and H268 together coordinate Zn(2+). Catalysis depends on D66, which acts as the Proton acceptor.

Belongs to the RNase Z family. In terms of assembly, homodimer. The cofactor is Zn(2+).

The catalysed reaction is Endonucleolytic cleavage of RNA, removing extra 3' nucleotides from tRNA precursor, generating 3' termini of tRNAs. A 3'-hydroxy group is left at the tRNA terminus and a 5'-phosphoryl group is left at the trailer molecule.. Its function is as follows. Zinc phosphodiesterase, which displays some tRNA 3'-processing endonuclease activity. Probably involved in tRNA maturation, by removing a 3'-trailer from precursor tRNA. This Pseudomonas putida (strain ATCC 700007 / DSM 6899 / JCM 31910 / BCRC 17059 / LMG 24140 / F1) protein is Ribonuclease Z.